A 330-amino-acid chain; its full sequence is Taste receptor type 2 member 117 (330 aa).

Topologically, residues 1-16 are extracellular; the sequence is MKHFWKILSVISQSTL. Residues 17-37 traverse the membrane as a helical segment; sequence SVILIVELVIGIIGNGFMVLV. Residues 38–53 are Cytoplasmic-facing; the sequence is HCMDWVKKKKMSLVNQ. A helical transmembrane segment spans residues 54–74; the sequence is ILTALSISRIFQLCLLFISLV. At 75-95 the chain is on the extracellular side; the sequence is INFSYTDLTTSSRMIQVMYNA. Asparagine 76 is a glycosylation site (N-linked (GlcNAc...) asparagine). Residues 96–116 traverse the membrane as a helical segment; that stretch reads WILANHFSIWIATCLTVLYFL. Topologically, residues 117-135 are cytoplasmic; sequence KIANFSNSFFLYLKWRVEK. A helical membrane pass occupies residues 136-156; it reads VVSVTLLVSLLLLILNILLTN. Over 157–190 the chain is Extracellular; it reads LETDMWTNEYQRNISCSFSSHYYAKCHRQVLRLH. N-linked (GlcNAc...) asparagine glycosylation occurs at asparagine 169. The chain crosses the membrane as a helical span at residues 191-211; it reads IIFLSVPVVLSLSTFLLLIFS. Residues 212 to 239 are Cytoplasmic-facing; it reads LWTHHKRMQQHVQGGRDARTTAHFKALQ. Residues 240–260 traverse the membrane as a helical segment; sequence TVIAFFLLYSIFILSVLIQIW. Residues 261–269 are Extracellular-facing; it reads KYELLKKNL. Residues 270–290 form a helical membrane-spanning segment; it reads FVVFCEVVYIAFPTFHSYILI. The Cytoplasmic segment spans residues 291-330; the sequence is VGDMKLRQACLPLCIIAAEIQTTLCRNFRSLKYFRLCCIF.

This sequence belongs to the G-protein coupled receptor T2R family.

It is found in the membrane. Its function is as follows. Putative taste receptor which may play a role in the perception of bitterness. The protein is Taste receptor type 2 member 117 of Mus musculus (Mouse).